Consider the following 145-residue polypeptide: 3-dehydroquinate dehydratase (145 aa).

Tyr-22 acts as the Proton acceptor in catalysis. Substrate is bound by residues Asn-71, His-77, and Asp-84. His-97 functions as the Proton donor in the catalytic mechanism. Residues 98–99 (IS) and Arg-108 contribute to the substrate site.

It belongs to the type-II 3-dehydroquinase family. In terms of assembly, homododecamer.

The enzyme catalyses 3-dehydroquinate = 3-dehydroshikimate + H2O. The protein operates within metabolic intermediate biosynthesis; chorismate biosynthesis; chorismate from D-erythrose 4-phosphate and phosphoenolpyruvate: step 3/7. Its function is as follows. Catalyzes a trans-dehydration via an enolate intermediate. In Exiguobacterium sp. (strain ATCC BAA-1283 / AT1b), this protein is 3-dehydroquinate dehydratase.